Reading from the N-terminus, the 372-residue chain is Secreted beta-glucosidase SIM1 (372 aa).

Positions 1-15 (MKYLTLLTVLSTALA) are cleaved as a signal peptide. Residues 51–85 (VTENASSGASSGETAETIQTRSSSDVSSSSDSNPV) are disordered. A compositionally biased stretch (low complexity) spans 52–85 (TENASSGASSGETAETIQTRSSSDVSSSSDSNPV). 2 N-linked (GlcNAc...) asparagine glycosylation sites follow: N54 and N351.

It belongs to the SUN family.

It is found in the secreted. The protein resides in the cell wall. Its function is as follows. Cell surface beta-glucosidase involved in cell wall maintenance and cytokinesis. Plays a role redundant to SUN41. The sequence is that of Secreted beta-glucosidase SIM1 (SIM1) from Candida albicans (strain SC5314 / ATCC MYA-2876) (Yeast).